We begin with the raw amino-acid sequence, 517 residues long: Membrane-bound lytic murein transglycosylase F (517 aa).

Positions 1 to 32 are cleaved as a signal peptide; the sequence is MKKFKINYLLIGIVTLLLAAALWPSIPWFGKA. The tract at residues 33–269 is non-LT domain; that stretch reads ENRIAAIQSR…RLEEKYLGHG (237 aa). The segment at 270-517 is LT domain; the sequence is GDFDYVDTRS…PNTLVQAPRR (248 aa). Glu314 is a catalytic residue.

In the N-terminal section; belongs to the bacterial solute-binding protein 3 family. This sequence in the C-terminal section; belongs to the transglycosylase Slt family.

Its subcellular location is the cell outer membrane. It carries out the reaction Exolytic cleavage of the (1-&gt;4)-beta-glycosidic linkage between N-acetylmuramic acid (MurNAc) and N-acetylglucosamine (GlcNAc) residues in peptidoglycan, from either the reducing or the non-reducing ends of the peptidoglycan chains, with concomitant formation of a 1,6-anhydrobond in the MurNAc residue.. Functionally, murein-degrading enzyme that degrades murein glycan strands and insoluble, high-molecular weight murein sacculi, with the concomitant formation of a 1,6-anhydromuramoyl product. Lytic transglycosylases (LTs) play an integral role in the metabolism of the peptidoglycan (PG) sacculus. Their lytic action creates space within the PG sacculus to allow for its expansion as well as for the insertion of various structures such as secretion systems and flagella. The chain is Membrane-bound lytic murein transglycosylase F from Enterobacter sp. (strain 638).